The sequence spans 100 residues: Urease subunit gamma (100 aa).

Belongs to the urease gamma subunit family. As to quaternary structure, heterotrimer of UreA (gamma), UreB (beta) and UreC (alpha) subunits. Three heterotrimers associate to form the active enzyme.

The protein localises to the cytoplasm. It carries out the reaction urea + 2 H2O + H(+) = hydrogencarbonate + 2 NH4(+). It participates in nitrogen metabolism; urea degradation; CO(2) and NH(3) from urea (urease route): step 1/1. The sequence is that of Urease subunit gamma from Staphylococcus aureus (strain N315).